Consider the following 193-residue polypeptide: Large ribosomal subunit protein eL18 (193 aa).

Positions 158-193 (HFGAAGVPGSHAKPHVSSRGKERQRSSKRRHAFRHK) are disordered. The span at 183-193 (SSKRRHAFRHK) shows a compositional bias: basic residues.

This sequence belongs to the eukaryotic ribosomal protein eL18 family.

The protein resides in the cytoplasm. The chain is Large ribosomal subunit protein eL18 (RPL18-A) from Trypanosoma brucei brucei (strain 927/4 GUTat10.1).